The primary structure comprises 130 residues: Small ribosomal subunit protein uS9 (130 aa).

This sequence belongs to the universal ribosomal protein uS9 family.

This is Small ribosomal subunit protein uS9 from Nitrosospira multiformis (strain ATCC 25196 / NCIMB 11849 / C 71).